Here is a 79-residue protein sequence, read N- to C-terminus: MSRKLLAVLMVCTFFLIAASMGTNALPFHEGIERRAAKCVDKMPFVCMRKDIPAICKNRNHRSYAFIMDVCRKTCGQCT.

Residues 1 to 25 (MSRKLLAVLMVCTFFLIAASMGTNA) form the signal peptide. A propeptide spanning residues 26–35 (LPFHEGIERR) is cleaved from the precursor. Residues 39–78 (CVDKMPFVCMRKDIPAICKNRNHRSYAFIMDVCRKTCGQC) form the ShKT domain. 3 cysteine pairs are disulfide-bonded: C39/C78, C47/C71, and C56/C75.

As to expression, expressed in nematocytes (in planulae and primary polyps). Is localized predominantly in the body column nematocytes and not in the tentacles (in primary polyps).

It is found in the nematocyst. The protein resides in the secreted. Functionally, neurotoxin. In vivo, induces contraction paralysis followed by death (within 2 hours) on zebrafish larvae. Also induces body contraction in Nematostella 11-dpf polyps. The polypeptide is Neurotoxin ShK-like1 (Nematostella vectensis (Starlet sea anemone)).